The sequence spans 357 residues: MSLTRLLIRDFRNIETADLALSPGFNFLVGANGSGKTSVLEAIYTLGHGRAFRSLQIGRVIRHEQEAFVLHGRLQGEERETAIGLTKDKQGDSKVRIDGTDGHKVAELAHLMPMQLITPEGFTLLNGGPKYRRAFLDWGCFHNEPGFFTAWSNLKRLLKQRNAALRQVTRYEQLRPWDKELIPLAEQISTWRAEYSAGIAADMADTCKQFLPEFTLTFSFQRGWEKETEYAEVLERNFERDRQLTYTAHGPHKADLRIRADGAPVEDTLSRGQLKLLMCALRLAQGEFLTRESGRRCLYLIDDFASELDDERRGLLASRLKATQSQVFVSAISAEHVIDMSDENSKMFTVEKGKITD.

ATP is bound at residue 30 to 37 (GANGSGKT).

The protein belongs to the RecF family.

The protein localises to the cytoplasm. Functionally, the RecF protein is involved in DNA metabolism; it is required for DNA replication and normal SOS inducibility. RecF binds preferentially to single-stranded, linear DNA. It also seems to bind ATP. This Escherichia coli O7:K1 (strain IAI39 / ExPEC) protein is DNA replication and repair protein RecF.